The primary structure comprises 305 residues: Superkiller complex protein 8 (305 aa).

M1 is modified (N-acetylmethionine). T2 is modified (N-acetylthreonine; in WD repeat-containing protein 61, N-terminally processed). WD repeat units lie at residues 14–57 (AHDD…LELQ), 62–101 (GHQL…QMKS), 104–143 (AGPV…KEYS), 146–187 (TRGK…HTLE), 188–227 (GHAM…LAGT), 230–269 (GHAS…CIHT), and 272–305 (DHQD…DCPI).

This sequence belongs to the SKI8 family. As to quaternary structure, component of the PAF1 complex, which consists of CDC73, PAF1, LEO1, CTR9, RTF1 and SKIC8. The PAF1 complex interacts with PHF5A. Within the PAF1 complex interacts directly with PHF5A. Component of the SKI complex which consists of SKIC2, SKIC3 and SKIC8.

The protein localises to the nucleus. It localises to the cytoplasm. Functionally, component of the PAF1 complex (PAF1C) which has multiple functions during transcription by RNA polymerase II and is implicated in regulation of development and maintenance of embryonic stem cell pluripotency. PAF1C associates with RNA polymerase II through interaction with POLR2A CTD non-phosphorylated and 'Ser-2'- and 'Ser-5'-phosphorylated forms and is involved in transcriptional elongation, acting both independently and synergistically with TCEA1 and in cooperation with the DSIF complex and HTATSF1. PAF1C is required for transcription of Hox and Wnt target genes. PAF1C is involved in hematopoiesis and stimulates transcriptional activity of KMT2A/MLL1; it promotes leukemogenesis through association with KMT2A/MLL1-rearranged oncoproteins, such as KMT2A/MLL1-MLLT3/AF9 and KMT2A/MLL1-MLLT1/ENL. PAF1C is involved in histone modifications such as ubiquitination of histone H2B and methylation on histone H3 'Lys-4' (H3K4me3). PAF1C recruits the RNF20/40 E3 ubiquitin-protein ligase complex and the E2 enzyme UBE2A or UBE2B to chromatin which mediate monoubiquitination of 'Lys-120' of histone H2B (H2BK120ub1); UB2A/B-mediated H2B ubiquitination is proposed to be coupled to transcription. PAF1C is involved in mRNA 3' end formation probably through association with cleavage and poly(A) factors. In case of infection by influenza A strain H3N2, PAF1C associates with viral NS1 protein, thereby regulating gene transcription. Required for mono- and trimethylation on histone H3 'Lys-4' (H3K4me3), dimethylation on histone H3 'Lys-79' (H3K4me3). Required for Hox gene transcription. Also acts as a component of the SKI complex, a multiprotein complex that assists the RNA-degrading exosome during the mRNA decay and quality-control pathways. The SKI complex catalyzes mRNA extraction from 80S ribosomal complexes in the 3'-5' direction and channels mRNA to the cytosolic exosome for degradation. SKI-mediated extraction of mRNA from stalled ribosomes allow binding of the Pelota-HBS1L complex and subsequent ribosome disassembly by ABCE1 for ribosome recycling. In Rattus norvegicus (Rat), this protein is Superkiller complex protein 8 (Skic8).